We begin with the raw amino-acid sequence, 158 residues long: C-type natriuretic peptide 3 (158 aa).

An N-terminal signal peptide occupies residues 1–21; sequence MSLNLPGYALFFILLVASSGA. Positions 22 to 136 are excised as a propeptide; it reads KPAPDLQILE…SKRSRSRYKK (115 aa). The disordered stretch occupies residues 32–95; it reads PPLSSLEEQE…EVQERGRGTG (64 aa). Residues 47–64 are compositionally biased toward basic and acidic residues; it reads VQEKVQEQQEEVQEKVQE. Acidic residues predominate over residues 65-86; that stretch reads QQEEVQEQQEEVQEQQEEQQEE. Cys-142 and Cys-158 form a disulfide bridge.

It belongs to the natriuretic peptide family.

It is found in the secreted. In terms of biological role, exhibits natriuretic and vasodepressant activity. Has cGMP-stimulating activity. May help to regulate body fluid homeostasis in a variety of aquatic environments. The polypeptide is C-type natriuretic peptide 3 (Takifugu rubripes (Japanese pufferfish)).